Reading from the N-terminus, the 96-residue chain is Toxin ParE1 (96 aa).

This sequence belongs to the RelE toxin family. Forms a ParD1(2)-ParE1(2) heterotetramer.

Toxic component of a type II toxin-antitoxin (TA) system. Its toxic effect is neutralized by coexpression with cognate antitoxin ParD1 but no other ParD or RelB antitoxin. Low levels of wild-type toxin in the absence of antitoxin decreases the rate of cell growth, and results in death or loss of colony formation abilities and greatly elongated cells. Low levels of a mutant missing the last 4 residues leads to loss of cell division while cell elongation continues. The sequence is that of Toxin ParE1 (parE1) from Caulobacter vibrioides (strain ATCC 19089 / CIP 103742 / CB 15) (Caulobacter crescentus).